The chain runs to 175 residues: Ferritin light chain (175 aa).

Position 2 is an N-acetylserine (Ser2). A Ferritin-like diiron domain is found at 7–156 (QNYSTEVEAA…DHLTNLRRLS (150 aa)). The Fe cation site is built by Glu54, Glu57, Glu58, Glu61, and Glu64.

The protein belongs to the ferritin family. As to quaternary structure, oligomer of 24 subunits. There are two types of subunits: L (light) chain and H (heavy) chain. The major chain can be light or heavy, depending on the species and tissue type. The functional molecule forms a roughly spherical shell with a diameter of 12 nm and contains a central cavity into which the insoluble mineral iron core is deposited. Interacts with NCOA4.

It is found in the cytoplasmic vesicle. The protein localises to the autophagosome. The protein resides in the cytoplasm. Its subcellular location is the autolysosome. Functionally, stores iron in a soluble, non-toxic, readily available form. Important for iron homeostasis. Iron is taken up in the ferrous form and deposited as ferric hydroxides after oxidation. Also plays a role in delivery of iron to cells. Mediates iron uptake in capsule cells of the developing kidney. Delivery to lysosomes by the cargo receptor NCOA4 for autophagic degradation and release or iron. The polypeptide is Ferritin light chain (FTL) (Felis catus (Cat)).